The sequence spans 412 residues: Histidine--tRNA ligase (412 aa).

This sequence belongs to the class-II aminoacyl-tRNA synthetase family. In terms of assembly, homodimer.

The protein resides in the cytoplasm. It carries out the reaction tRNA(His) + L-histidine + ATP = L-histidyl-tRNA(His) + AMP + diphosphate + H(+). The polypeptide is Histidine--tRNA ligase (Maridesulfovibrio salexigens (strain ATCC 14822 / DSM 2638 / NCIMB 8403 / VKM B-1763) (Desulfovibrio salexigens)).